The sequence spans 185 residues: Ribosome-recycling factor (185 aa).

Belongs to the RRF family.

Its subcellular location is the cytoplasm. Responsible for the release of ribosomes from messenger RNA at the termination of protein biosynthesis. May increase the efficiency of translation by recycling ribosomes from one round of translation to another. The polypeptide is Ribosome-recycling factor (Geobacillus sp. (strain WCH70)).